Reading from the N-terminus, the 130-residue chain is Large ribosomal subunit protein bL20 (130 aa).

This sequence belongs to the bacterial ribosomal protein bL20 family.

Functionally, binds directly to 23S ribosomal RNA and is necessary for the in vitro assembly process of the 50S ribosomal subunit. It is not involved in the protein synthesizing functions of that subunit. The protein is Large ribosomal subunit protein bL20 of Clavibacter sepedonicus (Clavibacter michiganensis subsp. sepedonicus).